The following is a 526-amino-acid chain: Transcription factor kayak (526 aa).

Disordered regions lie at residues 71–165 (PPLA…GTGG) and 178–221 (RNTN…NKQA). 2 stretches are compositionally biased toward low complexity: residues 78-87 (NNNNNNNNNG) and 133-153 (ISDT…HMMG). The segment covering 154–165 (NSGGGNGGGTGG) has biased composition (gly residues). The span at 178 to 187 (RNTNTSNSAT) shows a compositional bias: polar residues. A bZIP domain is found at 208 to 271 (EEKRRIRRER…NQLEYFLQAH (64 aa)). The tract at residues 210 to 229 (KRRIRRERNKQAAARCRKRR) is basic motif. Positions 236–264 (LTEEVELLEKRGENLKKEMELLNETKNQL) are leucine-zipper. The segment covering 301–322 (GSCGSGSSHHNNNSNSNDSSSG) has biased composition (low complexity). 2 disordered regions span residues 301 to 345 (GSCG…DLKP) and 504 to 526 (TSQN…LVSL). The segment covering 330 to 340 (TLNSTGRSNSP) has biased composition (polar residues). Phosphoserine is present on Ser-339.

Belongs to the bZIP family. Fos subfamily. Homodimer. Heterodimer with Jra. The kay-Jra heterodimer binds more stably to the AP-1 site than either of the two proteins alone.

The protein localises to the nucleus. In terms of biological role, developmentally regulated transcription factor AP-1 binds and recognizes the enhancer DNA sequence: 5'-TGA[CG]TCA-3'. May play a role in the function or determination of a particular subset of cells in the developing embryo. It is able to carry out its function either independently of or in conjunction with Jra. This Drosophila persimilis (Fruit fly) protein is Transcription factor kayak.